The following is a 248-amino-acid chain: Triosephosphate isomerase (248 aa).

9–11 is a substrate binding site; it reads NWK. Residue His-94 is the Electrophile of the active site. Residue Glu-166 is the Proton acceptor of the active site. Substrate-binding positions include Gly-172, Ser-212, and 233–234; that span reads GG.

This sequence belongs to the triosephosphate isomerase family. As to quaternary structure, homodimer.

The protein resides in the cytoplasm. It carries out the reaction D-glyceraldehyde 3-phosphate = dihydroxyacetone phosphate. Its pathway is carbohydrate biosynthesis; gluconeogenesis. It participates in carbohydrate degradation; glycolysis; D-glyceraldehyde 3-phosphate from glycerone phosphate: step 1/1. In terms of biological role, involved in the gluconeogenesis. Catalyzes stereospecifically the conversion of dihydroxyacetone phosphate (DHAP) to D-glyceraldehyde-3-phosphate (G3P). This is Triosephosphate isomerase from Alkaliphilus metalliredigens (strain QYMF).